Here is a 156-residue protein sequence, read N- to C-terminus: Small ribosomal subunit protein uS7 (156 aa).

It belongs to the universal ribosomal protein uS7 family. As to quaternary structure, part of the 30S ribosomal subunit. Contacts proteins S9 and S11.

Functionally, one of the primary rRNA binding proteins, it binds directly to 16S rRNA where it nucleates assembly of the head domain of the 30S subunit. Is located at the subunit interface close to the decoding center, probably blocks exit of the E-site tRNA. This chain is Small ribosomal subunit protein uS7, found in Bifidobacterium longum subsp. infantis (strain ATCC 15697 / DSM 20088 / JCM 1222 / NCTC 11817 / S12).